The following is a 414-amino-acid chain: CCA-adding enzyme (414 aa).

G8 and R11 together coordinate ATP. Positions 8 and 11 each coordinate CTP. Mg(2+) contacts are provided by D21 and D23. Residues R92, R138, and R141 each contribute to the ATP site. CTP contacts are provided by R92, R138, and R141.

This sequence belongs to the tRNA nucleotidyltransferase/poly(A) polymerase family. Bacterial CCA-adding enzyme type 2 subfamily. It depends on Mg(2+) as a cofactor.

The catalysed reaction is a tRNA precursor + 2 CTP + ATP = a tRNA with a 3' CCA end + 3 diphosphate. The enzyme catalyses a tRNA with a 3' CCA end + 2 CTP + ATP = a tRNA with a 3' CCACCA end + 3 diphosphate. In terms of biological role, catalyzes the addition and repair of the essential 3'-terminal CCA sequence in tRNAs without using a nucleic acid template. Adds these three nucleotides in the order of C, C, and A to the tRNA nucleotide-73, using CTP and ATP as substrates and producing inorganic pyrophosphate. tRNA 3'-terminal CCA addition is required both for tRNA processing and repair. Also involved in tRNA surveillance by mediating tandem CCA addition to generate a CCACCA at the 3' terminus of unstable tRNAs. While stable tRNAs receive only 3'-terminal CCA, unstable tRNAs are marked with CCACCA and rapidly degraded. The chain is CCA-adding enzyme from Buchnera aphidicola subsp. Cinara cedri (strain Cc).